Reading from the N-terminus, the 592-residue chain is Solute carrier family 13 member 2 (592 aa).

Helical transmembrane passes span 13-33, 53-73, 86-106, and 114-134; these read SYLI…LVPS, ALPL…MGIV, SNLL…WNLH, and LLIV…VTAF. A compositionally biased stretch (polar residues) spans 165-177; it reads SSNVEEGSNNPTF. A disordered region spans residues 165 to 185; the sequence is SSNVEEGSNNPTFELQEPSPQ. 8 consecutive transmembrane segments (helical) span residues 221–241, 274–294, 324–344, 371–391, 450–470, 482–502, 511–531, and 545–565; these read MSLC…TGTA, MVIL…GFNF, PMTF…LLWF, GTVA…FPGL, PLQS…VATF, IFLP…LYVM, LAFM…FGDL, and IIGV…LFSL.

Belongs to the SLC13A/DASS transporter (TC 2.A.47) family. NADC subfamily. In terms of tissue distribution, expressed in kidney and intestine. In kidney expressed in the proximal tubule (at protein level).

Its subcellular location is the apical cell membrane. It catalyses the reaction succinate(out) + 3 Na(+)(out) = succinate(in) + 3 Na(+)(in). The catalysed reaction is fumarate(out) + 3 Na(+)(out) = fumarate(in) + 3 Na(+)(in). The enzyme catalyses 2-oxoglutarate(out) + 3 Na(+)(out) = 2-oxoglutarate(in) + 3 Na(+)(in). Li(+) decreases succinate transport in the presence of Na(+), by competing at one of the three cation binding sites. Low-affinity sodium-dicarboxylate cotransporter, that mediates the entry of citric acid cycle intermediates, such as succinate, citrate, fumarate and alpha-ketoglutarate (2-oxoglutarate) into the small intestine and renal proximal tubule. Transports the dicarboxylate into the cell with a probable stoichiometry of 3 Na(+) for 1 divalent dicarboxylate, rendering the process electrogenic. Citrate is transported in protonated form as a divalent anion, rather than the trivalent form which is normally found in blood. Has a critical role in renal dicarboxylate transport. In Homo sapiens (Human), this protein is Solute carrier family 13 member 2 (SLC13A2).